The following is a 229-amino-acid chain: Large ribosomal subunit protein uL1 (229 aa).

It belongs to the universal ribosomal protein uL1 family. As to quaternary structure, part of the 50S ribosomal subunit.

Its function is as follows. Binds directly to 23S rRNA. The L1 stalk is quite mobile in the ribosome, and is involved in E site tRNA release. In terms of biological role, protein L1 is also a translational repressor protein, it controls the translation of the L11 operon by binding to its mRNA. The chain is Large ribosomal subunit protein uL1 from Leifsonia xyli subsp. xyli (strain CTCB07).